A 702-amino-acid chain; its full sequence is Elongation factor G 2 (702 aa).

The tr-type G domain maps to 8-291 (ELYRNIGIVA…AVIDYLPAPS (284 aa)). GTP is bound by residues 17–24 (AHVDAGKT), 89–93 (DTPGH), and 143–146 (NKMD). Residues 293–314 (IPAIRGTDPDDEEKHDERHADD) are disordered.

This sequence belongs to the TRAFAC class translation factor GTPase superfamily. Classic translation factor GTPase family. EF-G/EF-2 subfamily.

It localises to the cytoplasm. Functionally, catalyzes the GTP-dependent ribosomal translocation step during translation elongation. During this step, the ribosome changes from the pre-translocational (PRE) to the post-translocational (POST) state as the newly formed A-site-bound peptidyl-tRNA and P-site-bound deacylated tRNA move to the P and E sites, respectively. Catalyzes the coordinated movement of the two tRNA molecules, the mRNA and conformational changes in the ribosome. The polypeptide is Elongation factor G 2 (fusB) (Pseudomonas aeruginosa (strain ATCC 15692 / DSM 22644 / CIP 104116 / JCM 14847 / LMG 12228 / 1C / PRS 101 / PAO1)).